We begin with the raw amino-acid sequence, 106 residues long: Iron-sulfur cluster assembly protein CyaY (106 aa).

It belongs to the frataxin family.

Its function is as follows. Involved in iron-sulfur (Fe-S) cluster assembly. May act as a regulator of Fe-S biogenesis. The protein is Iron-sulfur cluster assembly protein CyaY of Escherichia fergusonii (strain ATCC 35469 / DSM 13698 / CCUG 18766 / IAM 14443 / JCM 21226 / LMG 7866 / NBRC 102419 / NCTC 12128 / CDC 0568-73).